A 533-amino-acid chain; its full sequence is CTP synthase (533 aa).

Residues 1–269 (MKKNLKILVI…HEILSSKLNI (269 aa)) are amidoligase domain. A CTP-binding site is contributed by Ser-16. Ser-16 is a binding site for UTP. ATP contacts are provided by residues 17–22 (GIGKGV) and Asp-73. 2 residues coordinate Mg(2+): Asp-73 and Glu-143. CTP-binding positions include 150–152 (DME), 190–195 (KSKPTQ), and Lys-226. Residues 190-195 (KSKPTQ) and Lys-226 each bind UTP. In terms of domain architecture, Glutamine amidotransferase type-1 spans 304–533 (YAELDDSYAS…LFLGLIKACI (230 aa)). Position 355 (Gly-355) interacts with L-glutamine. The Nucleophile; for glutamine hydrolysis role is filled by Cys-382. Residues 383 to 386 (LGLQ), Glu-406, and Arg-466 contribute to the L-glutamine site. Residues His-511 and Glu-513 contribute to the active site.

Belongs to the CTP synthase family. As to quaternary structure, homotetramer.

The enzyme catalyses UTP + L-glutamine + ATP + H2O = CTP + L-glutamate + ADP + phosphate + 2 H(+). It catalyses the reaction L-glutamine + H2O = L-glutamate + NH4(+). The catalysed reaction is UTP + NH4(+) + ATP = CTP + ADP + phosphate + 2 H(+). Its pathway is pyrimidine metabolism; CTP biosynthesis via de novo pathway; CTP from UDP: step 2/2. With respect to regulation, allosterically activated by GTP, when glutamine is the substrate; GTP has no effect on the reaction when ammonia is the substrate. The allosteric effector GTP functions by stabilizing the protein conformation that binds the tetrahedral intermediate(s) formed during glutamine hydrolysis. Inhibited by the product CTP, via allosteric rather than competitive inhibition. Its function is as follows. Catalyzes the ATP-dependent amination of UTP to CTP with either L-glutamine or ammonia as the source of nitrogen. Regulates intracellular CTP levels through interactions with the four ribonucleotide triphosphates. This is CTP synthase from Borreliella afzelii (strain PKo) (Borrelia afzelii).